The chain runs to 283 residues: Pseudokinase OPG198 (283 aa).

Residues Met1 and Lys30 each contribute to the ATP site. The 283-residue stretch at 1 to 283 folds into the Protein kinase domain; sequence MESFKYCFDN…DRLRKLFIQD (283 aa).

Belongs to the protein kinase superfamily. Ser/Thr protein kinase family. Poxviruses subfamily. In terms of assembly, interacts with B1/VPK1. Interacts with host VRK1. Interacts with host VRK2.

The protein resides in the host nucleus. Both catalytically active kinases B1/VPK1 and host VRK2 repress B12 inhibitory activity in a B1/VPK1 deletion mutant strain. Functionally, pseudokinase that plays a role in viral DNA replication repression by activating the antiviral protein BANF1 and inhibiting the activity of host VRK1, a cellular modulator of BANF1. The chain is Pseudokinase OPG198 (OPG198) from Vaccinia virus (strain Western Reserve) (VACV).